Here is a 296-residue protein sequence, read N- to C-terminus: Lipoyl synthase (296 aa).

Cys37, Cys42, Cys48, Cys63, Cys67, Cys70, and Ser276 together coordinate [4Fe-4S] cluster. Positions 49 to 265 (WSKKHTTVMI…ERVAKTKGFL (217 aa)) constitute a Radical SAM core domain.

Belongs to the radical SAM superfamily. Lipoyl synthase family. [4Fe-4S] cluster is required as a cofactor.

The protein localises to the cytoplasm. The catalysed reaction is [[Fe-S] cluster scaffold protein carrying a second [4Fe-4S](2+) cluster] + N(6)-octanoyl-L-lysyl-[protein] + 2 oxidized [2Fe-2S]-[ferredoxin] + 2 S-adenosyl-L-methionine + 4 H(+) = [[Fe-S] cluster scaffold protein] + N(6)-[(R)-dihydrolipoyl]-L-lysyl-[protein] + 4 Fe(3+) + 2 hydrogen sulfide + 2 5'-deoxyadenosine + 2 L-methionine + 2 reduced [2Fe-2S]-[ferredoxin]. Its pathway is protein modification; protein lipoylation via endogenous pathway; protein N(6)-(lipoyl)lysine from octanoyl-[acyl-carrier-protein]: step 2/2. Functionally, catalyzes the radical-mediated insertion of two sulfur atoms into the C-6 and C-8 positions of the octanoyl moiety bound to the lipoyl domains of lipoate-dependent enzymes, thereby converting the octanoylated domains into lipoylated derivatives. The sequence is that of Lipoyl synthase from Rickettsia massiliae (strain Mtu5).